The primary structure comprises 101 residues: DNA-binding protein Fis (101 aa).

The H-T-H motif DNA-binding region spans 77–96; the sequence is QTRAANMLGINRGTLRKKLK.

The protein belongs to the transcriptional regulatory Fis family. Homodimer.

Activates ribosomal RNA transcription. Plays a direct role in upstream activation of rRNA promoters. The polypeptide is DNA-binding protein Fis (Shewanella sediminis (strain HAW-EB3)).